Reading from the N-terminus, the 419-residue chain is Tyrosine--tRNA ligase 2 (419 aa).

Tyr34 contacts L-tyrosine. The 'HIGH' region signature appears at 39–48; the sequence is PTGDSMHIGH. Residues Tyr168 and Gln172 each contribute to the L-tyrosine site. The short motif at 230–234 is the 'KMSKS' region element; it reads KFGKS. Lys233 serves as a coordination point for ATP. In terms of domain architecture, S4 RNA-binding spans 352–418; it reads KNIVEWLVDL…GKKNYSLVKL (67 aa).

Belongs to the class-I aminoacyl-tRNA synthetase family. TyrS type 1 subfamily. Homodimer.

It localises to the cytoplasm. The enzyme catalyses tRNA(Tyr) + L-tyrosine + ATP = L-tyrosyl-tRNA(Tyr) + AMP + diphosphate + H(+). In terms of biological role, catalyzes the attachment of tyrosine to tRNA(Tyr) in a two-step reaction: tyrosine is first activated by ATP to form Tyr-AMP and then transferred to the acceptor end of tRNA(Tyr). The sequence is that of Tyrosine--tRNA ligase 2 from Bacillus thuringiensis subsp. konkukian (strain 97-27).